Consider the following 166-residue polypeptide: Macrocypin-5a (166 aa).

Residues 20–39 form a disordered region; that stretch reads NIPGGMYASSKDGKDEPVTA.

This sequence belongs to the protease inhibitor I85 family.

Inhibits papain and cysteine cathepsin endopeptidases, and also inhibits cathepsins B and H, which exhibit both exopeptidase and endopeptidase activities. This chain is Macrocypin-5a, found in Macrolepiota procera (Parasol mushroom).